The sequence spans 465 residues: Protein CitXG (465 aa).

The segment at 1–182 (MQHFFTTFST…QSLAQNHDFA (182 aa)) is apo-citrate lyase phosphoribosyl-dephospho-CoA transferase. The tract at residues 183 to 465 (EHIGEQVYLA…TIFFLSFRGN (283 aa)) is 2-(5''-triphosphoribosyl)-3'-dephosphocoenzyme-A synthase.

It in the N-terminal section; belongs to the CitX family. The protein in the C-terminal section; belongs to the CitG/MdcB family.

It carries out the reaction apo-[citrate lyase ACP] + 2'-(5''-triphospho-alpha-D-ribosyl)-3'-dephospho-CoA = holo-[citrate lyase ACP] + diphosphate. It catalyses the reaction 3'-dephospho-CoA + ATP = 2'-(5''-triphospho-alpha-D-ribosyl)-3'-dephospho-CoA + adenine. Bifunctional enzyme that catalyzes formation of 2-(5''-triphosphoribosyl)-3'-dephosphocoenzyme-A, and then the transfer of this prosthetic group precursor to the apo-acyl carrier protein (gamma chain) of the citrate lyase to yield the holo-acyl carrier protein. In Haemophilus influenzae (strain ATCC 51907 / DSM 11121 / KW20 / Rd), this protein is Protein CitXG (citXG).